Consider the following 138-residue polypeptide: Large ribosomal subunit protein eL32 (138 aa).

This sequence belongs to the eukaryotic ribosomal protein eL32 family.

This chain is Large ribosomal subunit protein eL32 (rpl32e), found in Saccharolobus solfataricus (strain ATCC 35092 / DSM 1617 / JCM 11322 / P2) (Sulfolobus solfataricus).